The sequence spans 144 residues: Small ribosomal subunit protein eS19 (144 aa).

Belongs to the eukaryotic ribosomal protein eS19 family.

The protein is Small ribosomal subunit protein eS19 (RPS19) of Argopecten irradians (Bay scallop).